Reading from the N-terminus, the 650-residue chain is NAC domain-containing protein 54 (650 aa).

One can recognise an NAC domain in the interval 6 to 156 (LPPGFRFHPT…AYALCRVFKK (151 aa)). A DNA-binding region spans residues 105-162 (VGMKKTLVYYRGRAPHGSRTDWVMHEYRLDERECETDTGLQDAYALCRVFKKTAPGPK).

In terms of tissue distribution, expressed in leaves, roots and flowers.

It localises to the nucleus. Transcription factor that functions as a regulator of the jasmonate (JA) signaling pathway. May regulate the expression of genes encoding JA biosynthetic enzymes, such as lipoxygenase 7 (CM-LOX1), allene oxide synthase 2 (AOS2) and OPDA reductase 7 (OPR7). Involved in abscisic acid-induced leaf senescence. Activates the abscisic acid (ABA) signaling-associated gene ABI5 and the senescence-associated gene NYC1 by directly binding to the mitochondrial dysfunction motif (MDM) present in their promoters. Possesses transcriptional activator activity in yeast. Required for the multiplication of the rice dwarf virus (RDV). The protein is NAC domain-containing protein 54 of Oryza sativa subsp. japonica (Rice).